Reading from the N-terminus, the 253-residue chain is MICOS complex subunit mic25-b (253 aa).

A lipid anchor (N-myristoyl glycine) is attached at G2. Positions 38–82 (KDQSTWAASGAASGSATVPSKVGSSASHPAAASKDGAHKPTAAGV) are disordered. Residues 44 to 53 (AASGAASGSA) are compositionally biased toward low complexity. Residues 87-116 (AEEDLYRRYEREQTLIQEELARLAKREKDA) adopt a coiled-coil conformation. In terms of domain architecture, CHCH spans 206-248 (DPVCMDLQSNILKCYAENKQERLNCSDLAKEYQKCVSAAQKNL). 2 consecutive short sequence motifs (cx9C motif) follow at residues 209-219 (CMDLQSNILKC) and 230-240 (CSDLAKEYQKC). Cystine bridges form between C209-C240 and C219-C230.

It belongs to the MICOS complex subunit Mic19 family. Metazoan Mic25 subfamily. In terms of assembly, component of the mitochondrial contact site and cristae organizing system (MICOS) complex (also known as MINOS or MitOS complex).

It is found in the mitochondrion inner membrane. Its function is as follows. Component of the MICOS complex, a large protein complex of the mitochondrial inner membrane that plays crucial roles in the maintenance of crista junctions, inner membrane architecture, and formation of contact sites to the outer membrane. This chain is MICOS complex subunit mic25-b (chchd6-b), found in Xenopus laevis (African clawed frog).